The following is a 226-amino-acid chain: ATP synthase F(0) complex subunit a (226 aa).

A run of 6 helical transmembrane segments spans residues valine 13–tryptophan 33, tryptophan 69–leucine 89, threonine 97–alanine 117, isoleucine 138–valine 158, phenylalanine 179–leucine 199, and leucine 201–tyrosine 221.

The protein belongs to the ATPase A chain family. As to quaternary structure, component of the ATP synthase complex composed at least of ATP5F1A/subunit alpha, ATP5F1B/subunit beta, ATP5MC1/subunit c (homooctomer), MT-ATP6/subunit a, MT-ATP8/subunit 8, ATP5ME/subunit e, ATP5MF/subunit f, ATP5MG/subunit g, ATP5MK/subunit k, ATP5MJ/subunit j, ATP5F1C/subunit gamma, ATP5F1D/subunit delta, ATP5F1E/subunit epsilon, ATP5PF/subunit F6, ATP5PB/subunit b, ATP5PD/subunit d, ATP5PO/subunit OSCP. ATP synthase complex consists of a soluble F(1) head domain (subunits alpha(3) and beta(3)) - the catalytic core - and a membrane F(0) domain - the membrane proton channel (subunits c, a, 8, e, f, g, k and j). These two domains are linked by a central stalk (subunits gamma, delta, and epsilon) rotating inside the F1 region and a stationary peripheral stalk (subunits F6, b, d, and OSCP). Interacts with DNAJC30; interaction is direct.

Its subcellular location is the mitochondrion inner membrane. The catalysed reaction is H(+)(in) = H(+)(out). In terms of biological role, subunit a, of the mitochondrial membrane ATP synthase complex (F(1)F(0) ATP synthase or Complex V) that produces ATP from ADP in the presence of a proton gradient across the membrane which is generated by electron transport complexes of the respiratory chain. ATP synthase complex consist of a soluble F(1) head domain - the catalytic core - and a membrane F(1) domain - the membrane proton channel. These two domains are linked by a central stalk rotating inside the F(1) region and a stationary peripheral stalk. During catalysis, ATP synthesis in the catalytic domain of F(1) is coupled via a rotary mechanism of the central stalk subunits to proton translocation. With the subunit c (ATP5MC1), forms the proton-conducting channel in the F(0) domain, that contains two crucial half-channels (inlet and outlet) that facilitate proton movement from the mitochondrial intermembrane space (IMS) into the matrix. Protons are taken up via the inlet half-channel and released through the outlet half-channel, following a Grotthuss mechanism. The protein is ATP synthase F(0) complex subunit a of Xenopus laevis (African clawed frog).